Reading from the N-terminus, the 553-residue chain is Chaperonin GroEL 1 (553 aa).

Residues 29 to 32 (TIGP), 86 to 90 (DGTTT), G413, 476 to 478 (NAL), and D492 contribute to the ATP site. A disordered region spans residues 521-542 (KPEPPAAPAPGGDPMGGMGGMG). Residues 533–542 (DPMGGMGGMG) show a composition bias toward gly residues.

Belongs to the chaperonin (HSP60) family. As to quaternary structure, forms a cylinder of 14 subunits composed of two heptameric rings stacked back-to-back. Interacts with the co-chaperonin GroES.

The protein localises to the cytoplasm. The catalysed reaction is ATP + H2O + a folded polypeptide = ADP + phosphate + an unfolded polypeptide.. Its function is as follows. Together with its co-chaperonin GroES, plays an essential role in assisting protein folding. The GroEL-GroES system forms a nano-cage that allows encapsulation of the non-native substrate proteins and provides a physical environment optimized to promote and accelerate protein folding. This chain is Chaperonin GroEL 1, found in Synechococcus sp. (strain WH7803).